The sequence spans 256 residues: Putative cysteine-rich repeat secretory protein 21 (256 aa).

An N-terminal signal peptide occupies residues 1–30 (MYSSVSKRLVSVHILVVVALQLLFIPNVLS). Gnk2-homologous domains follow at residues 37-139 (YLHH…SIDT) and 145-253 (YQNN…LYPF).

It belongs to the cysteine-rich repeat secretory protein family.

It localises to the secreted. The sequence is that of Putative cysteine-rich repeat secretory protein 21 (CRRSP21) from Arabidopsis thaliana (Mouse-ear cress).